The following is a 305-amino-acid chain: Tyrosine recombinase XerC (305 aa).

The 92-residue stretch at 4-95 (TSIQALINKW…AVKNFYRFLE (92 aa)) folds into the Core-binding (CB) domain. One can recognise a Tyr recombinase domain in the interval 116 to 298 (LLPKALSEDD…SIKHLEAVYT (183 aa)). Active-site residues include R159, K182, H250, R253, and H276. The active-site O-(3'-phospho-DNA)-tyrosine intermediate is Y285.

This sequence belongs to the 'phage' integrase family. XerC subfamily. Forms a cyclic heterotetrameric complex composed of two molecules of XerC and two molecules of XerD.

The protein resides in the cytoplasm. Site-specific tyrosine recombinase, which acts by catalyzing the cutting and rejoining of the recombining DNA molecules. The XerC-XerD complex is essential to convert dimers of the bacterial chromosome into monomers to permit their segregation at cell division. It also contributes to the segregational stability of plasmids. This chain is Tyrosine recombinase XerC, found in Rickettsia africae (strain ESF-5).